A 183-amino-acid chain; its full sequence is ADP-ribosylation factor 3 (183 aa).

G2 carries N-myristoyl glycine lipidation. GTP-binding positions include 24–31, 67–71, and 126–129; these read GLDKAGKT, DVGGQ, and NKQD.

This sequence belongs to the small GTPase superfamily. Arf family. As to quaternary structure, interacts with RUD3.

It is found in the golgi apparatus. GTP-binding protein involved in protein trafficking; may modulate vesicle budding and uncoating within the Golgi apparatus. This Saccharomyces cerevisiae (strain ATCC 204508 / S288c) (Baker's yeast) protein is ADP-ribosylation factor 3 (ARF3).